The chain runs to 165 residues: Regulatory protein RecX (165 aa).

Belongs to the RecX family.

The protein resides in the cytoplasm. In terms of biological role, modulates RecA activity. This chain is Regulatory protein RecX, found in Cronobacter sakazakii (strain ATCC BAA-894) (Enterobacter sakazakii).